A 175-amino-acid chain; its full sequence is ATP-dependent protease subunit HslV (175 aa).

Threonine 2 is a catalytic residue. Na(+) contacts are provided by alanine 156, cysteine 159, and threonine 162.

The protein belongs to the peptidase T1B family. HslV subfamily. A double ring-shaped homohexamer of HslV is capped on each side by a ring-shaped HslU homohexamer. The assembly of the HslU/HslV complex is dependent on binding of ATP.

The protein resides in the cytoplasm. The enzyme catalyses ATP-dependent cleavage of peptide bonds with broad specificity.. With respect to regulation, allosterically activated by HslU binding. Protease subunit of a proteasome-like degradation complex believed to be a general protein degrading machinery. This is ATP-dependent protease subunit HslV from Rhizobium johnstonii (strain DSM 114642 / LMG 32736 / 3841) (Rhizobium leguminosarum bv. viciae).